Reading from the N-terminus, the 957-residue chain is MTTPLKPLDDAATSFARRHIGPSPRDVAAMLETVNAKSVAELMAQTLPGTIRQAAPLDIGPALSETEALSHMRALAAQNQVFTSLIGQGYAGTIMPAVIQRNILENPAWYTAYTPYQPEISQGRLEALFNFQTMICDLTGLDVANASLLDEGTAAAEAMALAERSARAKTKAFFVDHNVHPQTLTVLRTRAEPLGWKLIVGDPAGDLDGAEVFGGLLQYPDTTGALRDPRAAIAKLHDKGALAILAADLLALTLIASPGELGADIAIGSAQRFGVPMGYGGPHAAYMAVRDALKRSLPGRIVGLSVDSRGAPAYRLALQTREQHIRREKATSNICTAQVLLAVIAAMYAVYHGPAGLKAIARTVHRRTAVLAAGLRKLGFAPANDAFFDTVTVEAGANASSIIARAEAERINLGHNGSRLRIALDETTTADVVEAAWRAFGGELSYADIEAEARDAVPAELKRQRPYLTHPVFHAHRSETEMLRYLRKLADRDLALDRAMIPLGSCTMKLNATTEMIPLTWPEFSSLHPFVPRAQAAGYHAMFADLQDWLCRISGYDAVSLQPNSGAQGEYAGLLAIRGYHAARGEAHRTICLIPSSAHGTNPASAHMVGMEVVVVGCDAGGNVDLADLKAKAEAHSQKLAAIMITYPSTHGVFEEHIRDICDIVHAHGGQVYLDGANLNAQVGLARPGDYGADVSHFNLHKTFCIPHGGGGPGMGPIGVKAHLAPFLPGHPATDGKTAHPVGPVSAAPYGSASILTISYIYMLLMGGEGLTRATEIAILNANYVAARLDAHFPVLYRNERGRIAHECIIDPRLLKQTSGVTVDDIAKRLIDYGFHAPTMSFPVAGTLMIEPTESESKAELDRFCDAMIAIRKEIAEVEQGRFTIEASPLRHAPHTVHDIADDEWSRAYRRSEGCFPAGSSRTDKYWCPVGRVDNVYGDRNLVCSCPPVEDYAQAAE.

K702 is modified (N6-(pyridoxal phosphate)lysine).

Belongs to the GcvP family. As to quaternary structure, the glycine cleavage system is composed of four proteins: P, T, L and H. The cofactor is pyridoxal 5'-phosphate.

The enzyme catalyses N(6)-[(R)-lipoyl]-L-lysyl-[glycine-cleavage complex H protein] + glycine + H(+) = N(6)-[(R)-S(8)-aminomethyldihydrolipoyl]-L-lysyl-[glycine-cleavage complex H protein] + CO2. In terms of biological role, the glycine cleavage system catalyzes the degradation of glycine. The P protein binds the alpha-amino group of glycine through its pyridoxal phosphate cofactor; CO(2) is released and the remaining methylamine moiety is then transferred to the lipoamide cofactor of the H protein. The chain is Glycine dehydrogenase (decarboxylating) from Bradyrhizobium sp. (strain ORS 278).